The following is a 993-amino-acid chain: Serine/threonine-protein phosphatase 6 regulatory ankyrin repeat subunit B (993 aa).

ANK repeat units follow at residues 7–36, 40–69, 73–102, 106–135, 139–168, 172–201, 205–234, 238–267, 271–301, 305–334, 338–367, 371–400, 404–433, 437–466, 470–498, 531–561, 566–595, 599–628, 633–662, 669–698, 702–731, 735–764, 771–800, 803–832, 838–867, 871–901, 905–934, and 941–970; these read CEQPPLVQAIFSGDPEEIRMLIHKTEDVNA, EKRTPLHVAAFLGDAEIIELLILSGARVNA, MWLTPLHRAVASRSEEAVQVLIKHSADVNA, NWQTPLHVAAANKAVKCAEVIIPLLSSVNV, GGRTALHHAALNGHMEMVNLLLAKGANINA, KDRRALHWAAYMGHLDVVALLINHGAEVTC, KGYTPLHAAASNGQISVVKHLLNLGVEIDE, YGNTALHIACYNGQDAVVNELIDYGANVNQ, SGFTPLHFAAASTHGALCLELLVNNGADVNI, DGKSPLHMTAVHGRFTRSQTLIQNGGEIDC, DGNTPLHVAARHGHELLINTLITSGADTAK, HSMFPLHLAALNAHSDCCRKLLSSGFEIDT, FGRTCLHAAAAGGNVECIKLLQSSGADFHK, CGRTPLHYAAANCHFHCIKALVTTGANVNE, WGRTALHYAAASDMDRNKMILGNAHDNSE, EGYNSIHYAAAYGHRQCLELLLERTNTGFEE, ALKSPLHLAAYNGHHQALEVLLQSLVDLDI, KGRTALYLAAFKGHTECVEALVNQGASIFV, TKRTPLHASVINGHTLCLRLLLETADNPEV, KGQTPLMLAVAYGHIDAVSLLLEKEANVDA, VGCTALHRGIMTGHEECVQMLLEQEASILC, RGRTPLHYAAARGHATWLNELLQIALSEED, QGYTPLHWACYNGNENCIEVLLEQKCFRKF, NPFTPLHCAIINGHESCASLLLGAIDPSIV, KGRTTLHAAAFGDHAECLQLLLRHDAQVNA, SGKTALMMAAENGQAGAVDILVNSAQADLTV, DLNTPLHLAISKGHEKCALLILDKIQDESL, and ALQTPLHIAARNGLKVVVEELLAKGACVLA. A disordered region spans residues 974 to 993; it reads NASRSNGPRSPPGTAVRKEE.

In terms of assembly, protein phosphatase 6 (PP6) holoenzyme is proposed to be a heterotrimeric complex formed by the catalytic subunit, a SAPS domain-containing subunit (PP6R) and an ankyrin repeat-domain containing regulatory subunit (ARS). Interacts with PPP6R1.

Its function is as follows. Putative regulatory subunit of protein phosphatase 6 (PP6) that may be involved in the recognition of phosphoprotein substrates. This Mus musculus (Mouse) protein is Serine/threonine-protein phosphatase 6 regulatory ankyrin repeat subunit B (Ankrd44).